The chain runs to 195 residues: MEDIKSLIAGVDEVGKGCLFGPVFAAAVILSKENEIELLNQGLKDSKKLSHRQRHNLVPLIKTNSIAWTIGQASAREIDVIGIRDATEKAMLRALEKFSSPPDLILVDGILPIRLWPGKQKTQVRGESHFASIAAASVLAKETRDELIKRLARKYNCYGLEKNKGYGTEIHRTNLIKEGATKLHRKSFISRLEIN.

The 190-residue stretch at 6–195 (SLIAGVDEVG…KSFISRLEIN (190 aa)) folds into the RNase H type-2 domain. A divalent metal cation contacts are provided by Asp12, Glu13, and Asp108.

Belongs to the RNase HII family. Requires Mn(2+) as cofactor. Mg(2+) is required as a cofactor.

The protein localises to the cytoplasm. The catalysed reaction is Endonucleolytic cleavage to 5'-phosphomonoester.. Endonuclease that specifically degrades the RNA of RNA-DNA hybrids. This chain is Ribonuclease HII, found in Prochlorococcus marinus (strain NATL1A).